Here is a 430-residue protein sequence, read N- to C-terminus: Mannan endo-1,4-beta-mannosidase (430 aa).

The active-site Proton donor is glutamate 173. The Nucleophile role is filled by glutamate 269. CBM10 domains follow at residues 357 to 390 (SCGTAPNGYPYCCNASSATGNGWGWENNRSCVVA) and 395 to 424 (SCNWYGTSYPICVNTSSGWGWENNRSCIAA).

Belongs to the glycosyl hydrolase 5 (cellulase A) family.

The enzyme catalyses Random hydrolysis of (1-&gt;4)-beta-D-mannosidic linkages in mannans, galactomannans and glucomannans.. Its function is as follows. Catalyzes the endo hydrolysis of beta-1,4-linked mannan, galactomannan and glucomannan. It is able to hydrolyze mannosidic linkages that are flanked by mannose or glucose. The protein is Mannan endo-1,4-beta-mannosidase of Cellvibrio japonicus (strain Ueda107) (Pseudomonas fluorescens subsp. cellulosa).